Consider the following 145-residue polypeptide: 3-dehydroquinate dehydratase (145 aa).

The Proton acceptor role is filled by Tyr22. Positions 71, 77, and 84 each coordinate substrate. His97 serves as the catalytic Proton donor. Residues 98–99 (LS) and Arg108 each bind substrate.

Belongs to the type-II 3-dehydroquinase family. In terms of assembly, homododecamer.

It carries out the reaction 3-dehydroquinate = 3-dehydroshikimate + H2O. It participates in metabolic intermediate biosynthesis; chorismate biosynthesis; chorismate from D-erythrose 4-phosphate and phosphoenolpyruvate: step 3/7. In terms of biological role, catalyzes a trans-dehydration via an enolate intermediate. This Francisella tularensis subsp. mediasiatica (strain FSC147) protein is 3-dehydroquinate dehydratase.